The following is a 352-amino-acid chain: Fe(3+) ions import ATP-binding protein FbpC (352 aa).

Positions 5–239 (LHIGHLSKSF…PADLDAALFI (235 aa)) constitute an ABC transporter domain. 37–44 (GASGCGKT) lines the ATP pocket.

This sequence belongs to the ABC transporter superfamily. Fe(3+) ion importer (TC 3.A.1.10) family. In terms of assembly, the complex is composed of two ATP-binding proteins (FbpC), two transmembrane proteins (FbpB) and a solute-binding protein (FbpA).

The protein localises to the cell inner membrane. The catalysed reaction is Fe(3+)(out) + ATP + H2O = Fe(3+)(in) + ADP + phosphate + H(+). Its function is as follows. Part of the ABC transporter complex FbpABC involved in Fe(3+) ions import. Responsible for energy coupling to the transport system. In Neisseria gonorrhoeae (strain ATCC 700825 / FA 1090), this protein is Fe(3+) ions import ATP-binding protein FbpC.